The chain runs to 275 residues: Acetyl-coenzyme A carboxylase carboxyl transferase subunit beta (275 aa).

Residues 21 to 275 (GLWIKCQCGA…IKIIGMHQAG (255 aa)) form the CoA carboxyltransferase N-terminal domain. Positions 26, 28, 44, and 47 each coordinate Zn(2+). The segment at 26–47 (CQCGAILFAKDLERNLKVCQKC) adopts a C4-type zinc-finger fold.

The protein belongs to the AccD/PCCB family. Acetyl-CoA carboxylase is a heterohexamer composed of biotin carboxyl carrier protein (AccB), biotin carboxylase (AccC) and two subunits each of ACCase subunit alpha (AccA) and ACCase subunit beta (AccD). The cofactor is Zn(2+).

The protein resides in the cytoplasm. It catalyses the reaction N(6)-carboxybiotinyl-L-lysyl-[protein] + acetyl-CoA = N(6)-biotinyl-L-lysyl-[protein] + malonyl-CoA. It functions in the pathway lipid metabolism; malonyl-CoA biosynthesis; malonyl-CoA from acetyl-CoA: step 1/1. Its function is as follows. Component of the acetyl coenzyme A carboxylase (ACC) complex. Biotin carboxylase (BC) catalyzes the carboxylation of biotin on its carrier protein (BCCP) and then the CO(2) group is transferred by the transcarboxylase to acetyl-CoA to form malonyl-CoA. This is Acetyl-coenzyme A carboxylase carboxyl transferase subunit beta from Desulforudis audaxviator (strain MP104C).